Consider the following 665-residue polypeptide: UvrABC system protein B (665 aa).

A Helicase ATP-binding domain is found at 31 to 414 (DGVKGGEKAQ…EMEQTETVVQ (384 aa)). 44–51 (GATGTGKT) provides a ligand contact to ATP. The Beta-hairpin signature appears at 97 to 120 (YYDYYQPEAYVPSSDTYIEKDSSI). Residues 435–601 (QIDDLVGEIH…TIIKEIRDLI (167 aa)) form the Helicase C-terminal domain. Positions 629–664 (ADLLMKLEREMKDAAKALDFETAATLRDTILELKAA) constitute a UVR domain.

It belongs to the UvrB family. As to quaternary structure, forms a heterotetramer with UvrA during the search for lesions. Interacts with UvrC in an incision complex.

The protein localises to the cytoplasm. In terms of biological role, the UvrABC repair system catalyzes the recognition and processing of DNA lesions. A damage recognition complex composed of 2 UvrA and 2 UvrB subunits scans DNA for abnormalities. Upon binding of the UvrA(2)B(2) complex to a putative damaged site, the DNA wraps around one UvrB monomer. DNA wrap is dependent on ATP binding by UvrB and probably causes local melting of the DNA helix, facilitating insertion of UvrB beta-hairpin between the DNA strands. Then UvrB probes one DNA strand for the presence of a lesion. If a lesion is found the UvrA subunits dissociate and the UvrB-DNA preincision complex is formed. This complex is subsequently bound by UvrC and the second UvrB is released. If no lesion is found, the DNA wraps around the other UvrB subunit that will check the other stand for damage. The polypeptide is UvrABC system protein B (Enterococcus faecalis (strain ATCC 700802 / V583)).